Consider the following 100-residue polypeptide: Urease subunit gamma (100 aa).

This sequence belongs to the urease gamma subunit family. In terms of assembly, heterotrimer of UreA (gamma), UreB (beta) and UreC (alpha) subunits. Three heterotrimers associate to form the active enzyme.

The protein resides in the cytoplasm. It carries out the reaction urea + 2 H2O + H(+) = hydrogencarbonate + 2 NH4(+). It functions in the pathway nitrogen metabolism; urea degradation; CO(2) and NH(3) from urea (urease route): step 1/1. This chain is Urease subunit gamma, found in Micrococcus luteus (strain ATCC 4698 / DSM 20030 / JCM 1464 / CCM 169 / CCUG 5858 / IAM 1056 / NBRC 3333 / NCIMB 9278 / NCTC 2665 / VKM Ac-2230) (Micrococcus lysodeikticus).